The sequence spans 167 residues: MLKSVRLYIPSIAVMILSSNIAIANKNYDAGNATPLRQVADLIDNQITNIDNLFKNRLSLYESNSIKSNFITKDKQYIIVMEVPGFDKSQIKVKVNGNKLFITGNIEEKNKADYSDNYMNKNFNYVISLYEDVDQANISSSLKNGILTIILPRIEIKEQEAREIVID.

A sHSP domain is found at 59–167; it reads SLYESNSIKS…EQEAREIVID (109 aa).

Belongs to the small heat shock protein (HSP20) family.

In Rickettsia conorii (strain ATCC VR-613 / Malish 7), this protein is Small heat shock protein C1 (hspC1).